A 665-amino-acid chain; its full sequence is Coiled-coil domain-containing protein 138 (665 aa).

Threonine 48 is modified (phosphothreonine). A Phosphoserine modification is found at serine 49. Residues 198–323 (QQKFAEELQK…YEFMTIQRLK (126 aa)) are a coiled coil. Serine 469 carries the post-translational modification Phosphoserine.

This is Coiled-coil domain-containing protein 138 (CCDC138) from Macaca fascicularis (Crab-eating macaque).